The chain runs to 209 residues: tRNA(Phe) 7-((3-amino-3-carboxypropyl)-4-demethylwyosine(37)-N(4))-methyltransferase (209 aa).

This sequence belongs to the TYW3 family.

It carries out the reaction 4-demethyl-7-[(3S)-3-amino-3-carboxypropyl]wyosine(37) in tRNA(Phe) + S-adenosyl-L-methionine = 7-[(3S)-3-amino-3-carboxypropyl]wyosine(37) in tRNA(Phe) + S-adenosyl-L-homocysteine + H(+). S-adenosyl-L-methionine-dependent methyltransferase that acts as a component of the wyosine derivatives biosynthesis pathway. Probably methylates N-4 position of wybutosine-86 to produce wybutosine-72. The sequence is that of tRNA(Phe) 7-((3-amino-3-carboxypropyl)-4-demethylwyosine(37)-N(4))-methyltransferase from Saccharolobus solfataricus (strain ATCC 35092 / DSM 1617 / JCM 11322 / P2) (Sulfolobus solfataricus).